Consider the following 68-residue polypeptide: Large ribosomal subunit protein bL35 (68 aa).

Basic residues-rich tracts occupy residues 1 to 11 (MPKLKTRSSAK) and 19 to 29 (SGKVKHGKAFA). The tract at residues 1-54 (MPKLKTRSSAKKRFDVKKSGKVKHGKAFAKHLFTFSKTPKSKRSNRGTGHLRDM) is disordered.

This sequence belongs to the bacterial ribosomal protein bL35 family.

The chain is Large ribosomal subunit protein bL35 from Myxococcus xanthus (strain DK1622).